Consider the following 430-residue polypeptide: Serine hydroxymethyltransferase (430 aa).

Residues L123 and 127-129 (GHL) contribute to the (6S)-5,6,7,8-tetrahydrofolate site. Residue K232 is modified to N6-(pyridoxal phosphate)lysine. E248 is a binding site for (6S)-5,6,7,8-tetrahydrofolate.

The protein belongs to the SHMT family. Homodimer. Pyridoxal 5'-phosphate serves as cofactor.

The protein resides in the cytoplasm. The catalysed reaction is (6R)-5,10-methylene-5,6,7,8-tetrahydrofolate + glycine + H2O = (6S)-5,6,7,8-tetrahydrofolate + L-serine. The protein operates within one-carbon metabolism; tetrahydrofolate interconversion. It participates in amino-acid biosynthesis; glycine biosynthesis; glycine from L-serine: step 1/1. In terms of biological role, catalyzes the reversible interconversion of serine and glycine with tetrahydrofolate (THF) serving as the one-carbon carrier. This reaction serves as the major source of one-carbon groups required for the biosynthesis of purines, thymidylate, methionine, and other important biomolecules. Also exhibits THF-independent aldolase activity toward beta-hydroxyamino acids, producing glycine and aldehydes, via a retro-aldol mechanism. The polypeptide is Serine hydroxymethyltransferase (Anaplasma marginale (strain St. Maries)).